The primary structure comprises 105 residues: Pyrimidine/purine nucleoside phosphorylase (105 aa).

It belongs to the nucleoside phosphorylase PpnP family.

It carries out the reaction a purine D-ribonucleoside + phosphate = a purine nucleobase + alpha-D-ribose 1-phosphate. The enzyme catalyses adenosine + phosphate = alpha-D-ribose 1-phosphate + adenine. The catalysed reaction is cytidine + phosphate = cytosine + alpha-D-ribose 1-phosphate. It catalyses the reaction guanosine + phosphate = alpha-D-ribose 1-phosphate + guanine. It carries out the reaction inosine + phosphate = alpha-D-ribose 1-phosphate + hypoxanthine. The enzyme catalyses thymidine + phosphate = 2-deoxy-alpha-D-ribose 1-phosphate + thymine. The catalysed reaction is uridine + phosphate = alpha-D-ribose 1-phosphate + uracil. It catalyses the reaction xanthosine + phosphate = alpha-D-ribose 1-phosphate + xanthine. Functionally, catalyzes the phosphorolysis of diverse nucleosides, yielding D-ribose 1-phosphate and the respective free bases. Can use uridine, adenosine, guanosine, cytidine, thymidine, inosine and xanthosine as substrates. Also catalyzes the reverse reactions. This chain is Pyrimidine/purine nucleoside phosphorylase, found in Paracidovorax citrulli (strain AAC00-1) (Acidovorax citrulli).